Consider the following 29-residue polypeptide: L-serine dehydratase, beta chain (29 aa).

The protein belongs to the iron-sulfur dependent L-serine dehydratase family. Heterodimer of an alpha chain and a beta chain. Requires [4Fe-4S] cluster as cofactor.

The enzyme catalyses L-serine = pyruvate + NH4(+). Its pathway is carbohydrate biosynthesis; gluconeogenesis. In Anaerotignum propionicum (Clostridium propionicum), this protein is L-serine dehydratase, beta chain.